A 428-amino-acid chain; its full sequence is Glutamate-1-semialdehyde 2,1-aminomutase (428 aa).

K265 is subject to N6-(pyridoxal phosphate)lysine.

It belongs to the class-III pyridoxal-phosphate-dependent aminotransferase family. HemL subfamily. Homodimer. Pyridoxal 5'-phosphate is required as a cofactor.

The protein localises to the cytoplasm. The catalysed reaction is (S)-4-amino-5-oxopentanoate = 5-aminolevulinate. The protein operates within porphyrin-containing compound metabolism; protoporphyrin-IX biosynthesis; 5-aminolevulinate from L-glutamyl-tRNA(Glu): step 2/2. The sequence is that of Glutamate-1-semialdehyde 2,1-aminomutase from Shewanella frigidimarina (strain NCIMB 400).